Here is a 367-residue protein sequence, read N- to C-terminus: Chorismate synthase (367 aa).

Arg48 is a binding site for NADP(+). FMN is bound by residues Arg125–Ser127, Asn243–Ala244, Gly283, Lys298–Ser302, and Arg324.

It belongs to the chorismate synthase family. In terms of assembly, homotetramer. FMNH2 serves as cofactor.

It catalyses the reaction 5-O-(1-carboxyvinyl)-3-phosphoshikimate = chorismate + phosphate. It participates in metabolic intermediate biosynthesis; chorismate biosynthesis; chorismate from D-erythrose 4-phosphate and phosphoenolpyruvate: step 7/7. Functionally, catalyzes the anti-1,4-elimination of the C-3 phosphate and the C-6 proR hydrogen from 5-enolpyruvylshikimate-3-phosphate (EPSP) to yield chorismate, which is the branch point compound that serves as the starting substrate for the three terminal pathways of aromatic amino acid biosynthesis. This reaction introduces a second double bond into the aromatic ring system. The chain is Chorismate synthase from Psychrobacter sp. (strain PRwf-1).